The following is a 311-amino-acid chain: Malate dehydrogenase (311 aa).

Residues 7-13 (GAAGGIG) and D34 contribute to the NAD(+) site. Substrate contacts are provided by R81 and R87. Residues N94 and 117 to 119 (ITN) contribute to the NAD(+) site. Residues N119 and R153 each coordinate substrate. H177 functions as the Proton acceptor in the catalytic mechanism. M227 contributes to the NAD(+) binding site.

The protein belongs to the LDH/MDH superfamily. MDH type 1 family. As to quaternary structure, homodimer.

The catalysed reaction is (S)-malate + NAD(+) = oxaloacetate + NADH + H(+). Functionally, catalyzes the reversible oxidation of malate to oxaloacetate. The protein is Malate dehydrogenase of Histophilus somni (strain 2336) (Haemophilus somnus).